Reading from the N-terminus, the 545-residue chain is MTALFNFWRIMYANISSIWLLVVSFFEWLFSATSISQQRGSGPRKGKVVMNKDCRSWEDWKVLATTIDKASGRWKWRFTPASDKYDYLLIDRCTVSLKRYRQRKSVYPMLMFLRSSLLRNFGNIGNSSLYTENYSGTKILIEEYVREVNNCLEFLYHTKRLSYDVKCDFFSAARISFGTTCLYFNGGTAFGLYHFGVAKTLWKRNLLPQILAGCASGALIASLLSVYRDEELNGLFDTFPSELWKICQQTSDYSLSKVVEYGNMLDISMIASFVRQRLGTITFQEAFERTGRIVNIVAPPSAVSGSPQVLNYFTAPNVLIWSAVCSSNSWAAIYRSSPLLAKLPDGSTEVCTPKNFIWPYAGLPNTGRSNPYARISEIFNVNHFVITQSRPSLFPTFYDELHHHRVSGYSLKMIRLVGLEMAYRFRQLDILGLLPPRLRRFFVDDYVPSAYITLTPTFSFSDIKHAFTKPSLSDIQYWILVGERATWQAIPLLQVRCKTEISLRHLSKNLTNSYVEPLSVNNLASPFVTNLEENQEKMLKIFKVK.

One can recognise a PNPLA domain in the interval leucine 182 to tryptophan 358. Residues glycine 213–glycine 217 carry the GXSXG motif.

Its subcellular location is the lipid droplet. It carries out the reaction a triacylglycerol + H2O = a diacylglycerol + a fatty acid + H(+). Its function is as follows. Lipid particle-localized triacylglycerol (TAG) lipase. The lipid droplet/particle is a lipid storage compartment which serves as a depot of energy and building blocks for membrane lipid biosynthesis. Involved in the mobilization of the non-polar storage lipids triacylglycerols (TAGs) from lipid particles by hydrolysis of TAGs, releasing and supplying specific fatty acids to the appropriate metabolic pathways. This chain is Triacylglycerol lipase ptl1 (ptl1), found in Schizosaccharomyces pombe (strain 972 / ATCC 24843) (Fission yeast).